The primary structure comprises 200 residues: uncharacterized protein (200 aa).

A signal peptide spans 1-19 (MNAMFHSLFALSFVSLVAS). Residues 148–168 (FMVIVSLAAFCISVLAGLALQ) form a helical membrane-spanning segment.

The protein localises to the membrane. This is an uncharacterized protein from Caenorhabditis elegans.